The primary structure comprises 286 residues: Formamidopyrimidine-DNA glycosylase (286 aa).

Pro2 functions as the Schiff-base intermediate with DNA in the catalytic mechanism. The active-site Proton donor is Glu3. Catalysis depends on Lys61, which acts as the Proton donor; for beta-elimination activity. 3 residues coordinate DNA: His96, Arg115, and Lys161. The FPG-type zinc-finger motif lies at 247–281; it reads EAYGREGEPCRRCGRAMRREAFMNRSSYFCPSCQR. Residue Arg271 is the Proton donor; for delta-elimination activity of the active site.

Belongs to the FPG family. Monomer. Zn(2+) is required as a cofactor.

It catalyses the reaction Hydrolysis of DNA containing ring-opened 7-methylguanine residues, releasing 2,6-diamino-4-hydroxy-5-(N-methyl)formamidopyrimidine.. It carries out the reaction 2'-deoxyribonucleotide-(2'-deoxyribose 5'-phosphate)-2'-deoxyribonucleotide-DNA = a 3'-end 2'-deoxyribonucleotide-(2,3-dehydro-2,3-deoxyribose 5'-phosphate)-DNA + a 5'-end 5'-phospho-2'-deoxyribonucleoside-DNA + H(+). In terms of biological role, involved in base excision repair of DNA damaged by oxidation or by mutagenic agents. Acts as a DNA glycosylase that recognizes and removes damaged bases. Has a preference for oxidized purines, such as 7,8-dihydro-8-oxoguanine (8-oxoG). Has AP (apurinic/apyrimidinic) lyase activity and introduces nicks in the DNA strand. Cleaves the DNA backbone by beta-delta elimination to generate a single-strand break at the site of the removed base with both 3'- and 5'-phosphates. The polypeptide is Formamidopyrimidine-DNA glycosylase (Mycobacteroides abscessus (strain ATCC 19977 / DSM 44196 / CCUG 20993 / CIP 104536 / JCM 13569 / NCTC 13031 / TMC 1543 / L948) (Mycobacterium abscessus)).